The following is a 526-amino-acid chain: Dual specificity tyrosine-phosphorylation-regulated kinase 2 (526 aa).

2 stretches are compositionally biased toward polar residues: residues 30-40 (TTQPNGLTTLG) and 60-70 (GSSSSLKSTDG). Residues 30–76 (TTQPNGLTTLGKSGLPVVQDRQSESAHRRQGSSSSLKSTDGTGKVKA) form a disordered region. T31 carries the post-translational modification Phosphothreonine; by ATM. The short motif at 114–116 (KKR) is the Nuclear localization signal element. Positions 147 to 460 (YEVLKVIGKG…PSQALRHPWL (314 aa)) constitute a Protein kinase domain. ATP-binding positions include 153–161 (IGKGSFGQV), K176, and 226–229 (FELL). D273 (proton acceptor) is an active-site residue. Position 307 is a phosphotyrosine (Y307). S367 is modified (phosphoserine; by ATM). The segment at 462–499 (RRLPKPPTGEKASAKRITESTGAITSISKLPPTSSSAS) is disordered. Positions 480 to 499 (ESTGAITSISKLPPTSSSAS) are enriched in polar residues.

The protein belongs to the protein kinase superfamily. CMGC Ser/Thr protein kinase family. MNB/DYRK subfamily. In terms of assembly, interacts with MDM2. Mg(2+) serves as cofactor. The cofactor is Mn(2+). In terms of processing, phosphorylated on serine/threonine residues. Phosphorylation on Thr-31 and Ser-367 by ATM in response to genotoxic stress disrupts MDM2 binding and prevents MDM2-mediated ubiquitination and subsequent proteasome degradation, thus promoting p53/TP53-mediated apoptosis. Post-translationally, ubiquitination in nucleus by MDM2 in normal conditions leads to proteasome degradation.

The protein resides in the cytoplasm. The protein localises to the nucleus. It catalyses the reaction L-seryl-[protein] + ATP = O-phospho-L-seryl-[protein] + ADP + H(+). The catalysed reaction is L-threonyl-[protein] + ATP = O-phospho-L-threonyl-[protein] + ADP + H(+). The enzyme catalyses L-tyrosyl-[protein] + ATP = O-phospho-L-tyrosyl-[protein] + ADP + H(+). With respect to regulation, autophosphorylates on tyrosine residues. Serine/threonine-protein kinase involved in the control of mitotic transition and the regulation of cellular growth and/or development. The sequence is that of Dual specificity tyrosine-phosphorylation-regulated kinase 2 from Gallus gallus (Chicken).